The chain runs to 289 residues: 2-dehydro-3-deoxyphosphooctonate aldolase (289 aa).

It belongs to the KdsA family.

It localises to the cytoplasm. It catalyses the reaction D-arabinose 5-phosphate + phosphoenolpyruvate + H2O = 3-deoxy-alpha-D-manno-2-octulosonate-8-phosphate + phosphate. It functions in the pathway carbohydrate biosynthesis; 3-deoxy-D-manno-octulosonate biosynthesis; 3-deoxy-D-manno-octulosonate from D-ribulose 5-phosphate: step 2/3. It participates in bacterial outer membrane biogenesis; lipopolysaccharide biosynthesis. The protein is 2-dehydro-3-deoxyphosphooctonate aldolase of Cupriavidus necator (strain ATCC 17699 / DSM 428 / KCTC 22496 / NCIMB 10442 / H16 / Stanier 337) (Ralstonia eutropha).